Reading from the N-terminus, the 286-residue chain is 4-diphosphocytidyl-2-C-methyl-D-erythritol kinase (286 aa).

Lys11 is an active-site residue. 94–104 lines the ATP pocket; it reads PMGGGIGGGSS. Residue Asp136 is part of the active site.

Belongs to the GHMP kinase family. IspE subfamily.

The catalysed reaction is 4-CDP-2-C-methyl-D-erythritol + ATP = 4-CDP-2-C-methyl-D-erythritol 2-phosphate + ADP + H(+). It functions in the pathway isoprenoid biosynthesis; isopentenyl diphosphate biosynthesis via DXP pathway; isopentenyl diphosphate from 1-deoxy-D-xylulose 5-phosphate: step 3/6. Catalyzes the phosphorylation of the position 2 hydroxy group of 4-diphosphocytidyl-2C-methyl-D-erythritol. In Pseudomonas putida (strain GB-1), this protein is 4-diphosphocytidyl-2-C-methyl-D-erythritol kinase.